A 300-amino-acid polypeptide reads, in one-letter code: F-box associated domain-containing protein sdz-33 (300 aa).

The region spanning 5–51 is the F-box domain; that stretch reads PFPILCLPDFVLQKSLKLMGVVEHLCLSILSKNIKQLIATLKGYPKC.

As to expression, expressed in D-type motor neuron cell bodies.

Substrate recognition component of E3 ubiquitin-protein ligase complex which mediates the ubiquitination and subsequent proteasomal degradation of target proteins such as mdl-1. Positively regulates axon regeneration by targeting mdl-1 for ubiquitin-mediated degradation; probably thereby reducing levels of mdl-1-mxl-1 heterodimers, allowing free mxl-1 to form complexes with tdpt-1 and thus inhibiting tdpt-1-dependent sumoylation of ets-4. In Caenorhabditis elegans, this protein is F-box associated domain-containing protein sdz-33.